Here is a 79-residue protein sequence, read N- to C-terminus: UPF0349 protein BCE33L4669 (79 aa).

This sequence belongs to the UPF0349 family.

The protein is UPF0349 protein BCE33L4669 of Bacillus cereus (strain ZK / E33L).